We begin with the raw amino-acid sequence, 396 residues long: Tryptophan synthase beta chain (396 aa).

Lys-88 bears the N6-(pyridoxal phosphate)lysine mark.

This sequence belongs to the TrpB family. In terms of assembly, tetramer of two alpha and two beta chains. Requires pyridoxal 5'-phosphate as cofactor.

The enzyme catalyses (1S,2R)-1-C-(indol-3-yl)glycerol 3-phosphate + L-serine = D-glyceraldehyde 3-phosphate + L-tryptophan + H2O. Its pathway is amino-acid biosynthesis; L-tryptophan biosynthesis; L-tryptophan from chorismate: step 5/5. Functionally, the beta subunit is responsible for the synthesis of L-tryptophan from indole and L-serine. The chain is Tryptophan synthase beta chain from Shewanella oneidensis (strain ATCC 700550 / JCM 31522 / CIP 106686 / LMG 19005 / NCIMB 14063 / MR-1).